A 338-amino-acid chain; its full sequence is Probable family 20 transposase (338 aa).

It belongs to the transposase 20 family.

Functionally, required for the transposition of an insertion element. This Pseudomonas aeruginosa (strain ATCC 15692 / DSM 22644 / CIP 104116 / JCM 14847 / LMG 12228 / 1C / PRS 101 / PAO1) protein is Probable family 20 transposase.